We begin with the raw amino-acid sequence, 181 residues long: Malignant T-cell-amplified sequence 1-B (181 aa).

In terms of domain architecture, PUA spans 92-171 (LPHQQVDKGA…IGIENIHYLN (80 aa)).

This sequence belongs to the MCTS1 family.

The protein localises to the cytoplasm. In terms of biological role, plays a role as translation enhancer and involved in cell cycle regulation. This chain is Malignant T-cell-amplified sequence 1-B (mcts1-b), found in Xenopus laevis (African clawed frog).